A 243-amino-acid chain; its full sequence is Homeobox protein goosecoid isoform B (243 aa).

Positions 148 to 207 (KRRHRTIFTDEQLEALENLFQETKYPDVGTREQLARRVHLREEKVEVWFKNRRAKWRRQK) form a DNA-binding region, homeobox. The disordered stretch occupies residues 201–243 (AKWRRQKRSSSEESENAQKWNKSSKNSAEKRDEQAKSDLDSDS). Residues 217–226 (AQKWNKSSKN) are compositionally biased toward polar residues. Basic and acidic residues predominate over residues 227 to 243 (SAEKRDEQAKSDLDSDS).

Belongs to the paired homeobox family. Bicoid subfamily.

It localises to the nucleus. Its function is as follows. Plays a central role in executing Spemann's organizer phenomenon (the dorsal blastopore lip of the early Xenopus laevis gastrula can organize a complete secondary body axis when transplanted to another embryo). This chain is Homeobox protein goosecoid isoform B (gsc-b), found in Xenopus laevis (African clawed frog).